We begin with the raw amino-acid sequence, 408 residues long: MKDQYDLVVVGAGPAGSIAATTAAKKGLSVLMLEKRQEIGEPVRCAEGVGKKRLRQHIELDEKWLCGEVSSAKIISPNGTTLTMAEEDAGSEVGYVLDRKIFDRTLVELSGEAGVDIMVKARVTGLIIEENTVCGVEMMHLGKTYSIRSKLVIGADGVESKVGRWAGIDTSLKPSHIETCAQFLVSGVDIDQSSCYFYMGNKVAPGGYVWVFPKGNNMANVGIGILGSRAGEKKPIEYLTDFVEANYPNGSIIEQVAGAVPASGPIEKTIANGLMLVGDAARQSDPFTGGGISNAMDAGLYAGEVAAEAIAQDDVSEKILQKYEKRWRGSFGNEIANNLIVKETFFSLSDEDLDSLALSIKDVDFKKMDLIDFIAALFKANKKLLWNLRPLFTQKLKQKFSGLTKFKR.

10 residues coordinate FAD: A15, E34, C45, A46, G48, R99, V123, D279, G291, and I292.

This sequence belongs to the geranylgeranyl reductase family. DGGGPL reductase subfamily. The cofactor is FAD.

The catalysed reaction is a 2,3-bis-O-phytanyl-sn-glycerol 1-phospholipid + 8 oxidized 2[4Fe-4S]-[ferredoxin] = a 2,3-bis-O-(geranylgeranyl)-sn-glycerol 1-phospholipid + 8 reduced 2[4Fe-4S]-[ferredoxin] + 16 H(+). The enzyme catalyses 2,3-bis-O-(phytanyl)-sn-glycerol 1-phosphate + 8 oxidized 2[4Fe-4S]-[ferredoxin] = 2,3-bis-O-(geranylgeranyl)-sn-glycerol 1-phosphate + 8 reduced 2[4Fe-4S]-[ferredoxin] + 16 H(+). It catalyses the reaction a 2,3-bis-O-phytanyl-sn-glycerol 1-phospholipid + 8 A = a 2,3-bis-O-(geranylgeranyl)-sn-glycerol 1-phospholipid + 8 AH2. It carries out the reaction CDP-2,3-bis-O-(geranylgeranyl)-sn-glycerol + 8 AH2 = CDP-2,3-bis-O-(phytanyl)-sn-glycerol + 8 A. The catalysed reaction is archaetidylserine + 8 AH2 = 2,3-bis-O-phytanyl-sn-glycero-3-phospho-L-serine + 8 A. The protein operates within membrane lipid metabolism; glycerophospholipid metabolism. Is involved in the reduction of 2,3-digeranylgeranylglycerophospholipids (unsaturated archaeols) into 2,3-diphytanylglycerophospholipids (saturated archaeols) in the biosynthesis of archaeal membrane lipids. Catalyzes the formation of archaetidic acid (2,3-di-O-phytanyl-sn-glyceryl phosphate) from 2,3-di-O-geranylgeranylglyceryl phosphate (DGGGP) via the hydrogenation of each double bond of the isoprenoid chains. Is also probably able to reduce double bonds of geranyl groups in CDP-2,3-bis-O-(geranylgeranyl)-sn-glycerol and archaetidylserine, thus acting at various stages in the biosynthesis of archaeal membrane lipids. The protein is Digeranylgeranylglycerophospholipid reductase 1 of Methanococcoides burtonii (strain DSM 6242 / NBRC 107633 / OCM 468 / ACE-M).